The primary structure comprises 104 residues: NADH-quinone oxidoreductase subunit K (104 aa).

Helical transmembrane passes span 7 to 27 (PDMA…GVLV), 31 to 51 (LLFM…AFVA), and 63 to 83 (VMFL…LAIL).

It belongs to the complex I subunit 4L family. NDH-1 is composed of 14 different subunits. Subunits NuoA, H, J, K, L, M, N constitute the membrane sector of the complex.

It localises to the cell inner membrane. It catalyses the reaction a quinone + NADH + 5 H(+)(in) = a quinol + NAD(+) + 4 H(+)(out). Its function is as follows. NDH-1 shuttles electrons from NADH, via FMN and iron-sulfur (Fe-S) centers, to quinones in the respiratory chain. The immediate electron acceptor for the enzyme in this species is believed to be ubiquinone. Couples the redox reaction to proton translocation (for every two electrons transferred, four hydrogen ions are translocated across the cytoplasmic membrane), and thus conserves the redox energy in a proton gradient. In Gluconacetobacter diazotrophicus (strain ATCC 49037 / DSM 5601 / CCUG 37298 / CIP 103539 / LMG 7603 / PAl5), this protein is NADH-quinone oxidoreductase subunit K.